The following is a 471-amino-acid chain: Protein naked cuticle homolog 1 (471 aa).

Disordered regions lie at residues 1 to 23 and 41 to 82; these read MGKL…GDSF and QRCP…DEDD. The N-myristoyl glycine moiety is linked to residue glycine 2. Positions 62–75 are enriched in basic and acidic residues; sequence GTRELVGDTSREAL. The tract at residues 125–190 is interaction with DVL1, DVL2 and DVL3; it reads QCDVSVEEDS…LRVKLTVAPD (66 aa). An EF-hand domain is found at 131–166; sequence EEDSRQEWTFTLYDFDNNGKVTREDITSLLHTIYEV. Ca(2+) contacts are provided by aspartate 144, aspartate 146, asparagine 148, lysine 150, and aspartate 155. Disordered regions lie at residues 273 to 314, 337 to 382, and 448 to 471; these read GPGS…QGVD, GTQD…SPSA, and QAVQ…FYQP. Positions 453–471 are enriched in basic residues; the sequence is HEHHHHHEHHHHYHHFYQP.

Belongs to the NKD family. As to quaternary structure, interacts with DVL1, DVL2, DVL3 and PPP2R3A. Highly expressed in lung. Also expressed in brain, heart, kidney, liver, skin, stomach and testis. Within the testis expression is found in the seminiferous epithelium and round and elongating spermatids.

The protein resides in the cell membrane. Its subcellular location is the cytoplasm. Cell autonomous antagonist of the canonical Wnt signaling pathway. May activate a second Wnt signaling pathway that controls planar cell polarity. Required for spermatogenesis. The sequence is that of Protein naked cuticle homolog 1 (Nkd1) from Mus musculus (Mouse).